Reading from the N-terminus, the 506-residue chain is Maturase K (506 aa).

Belongs to the intron maturase 2 family. MatK subfamily.

It localises to the plastid. The protein localises to the chloroplast. Functionally, usually encoded in the trnK tRNA gene intron. Probably assists in splicing its own and other chloroplast group II introns. This Lathyrus tingitanus (Tangier pea) protein is Maturase K.